The primary structure comprises 782 residues: Acetazolamide conferring resistance protein zam (782 aa).

The RNB domain occupies 270 to 579 (EVALSLESQA…QRLLKLVLTE (310 aa)). An S1 motif domain is found at 655 to 736 (GEIFRGLITG…YRQQIDLGAV (82 aa)). The disordered stretch occupies residues 737-782 (NNAPKDSANMDFDDDDEDGDEREEQDTMDWDAMEDGDDDEGGAVIF). Residues 747 to 782 (DFDDDDEDGDEREEQDTMDWDAMEDGDDDEGGAVIF) show a composition bias toward acidic residues.

Belongs to the RNR ribonuclease family.

Functionally, not known; control resistance to the carbonic anhydrase inhibitor acetazolamide. This Synechocystis sp. (strain ATCC 27184 / PCC 6803 / Kazusa) protein is Acetazolamide conferring resistance protein zam (zam).